The sequence spans 173 residues: NADH-ubiquinone oxidoreductase chain 6 (173 aa).

A run of 6 helical transmembrane segments spans residues 1–21, 27–47, 53–73, 82–102, 106–126, and 141–161; these read MIYF…AVAS, FAAL…VGYG, LVLF…SAAL, WGSW…LLVG, YGWW…MSVL, and GFLL…VLEI.

It belongs to the complex I subunit 6 family.

The protein localises to the mitochondrion membrane. It carries out the reaction a ubiquinone + NADH + 5 H(+)(in) = a ubiquinol + NAD(+) + 4 H(+)(out). Its function is as follows. Core subunit of the mitochondrial membrane respiratory chain NADH dehydrogenase (Complex I) that is believed to belong to the minimal assembly required for catalysis. Complex I functions in the transfer of electrons from NADH to the respiratory chain. The immediate electron acceptor for the enzyme is believed to be ubiquinone. The chain is NADH-ubiquinone oxidoreductase chain 6 (MT-ND6) from Latimeria chalumnae (Coelacanth).